A 327-amino-acid chain; its full sequence is Eukaryotic translation initiation factor 3 subunit I (327 aa).

5 WD repeats span residues 8–49 (GHER…GSYD), 51–89 (HNGA…CIYT), 188–227 (VHRY…KLKQ), 229–268 (KSER…GHFE), and 285–324 (GHFG…LGFT).

Belongs to the eIF-3 subunit I family. In terms of assembly, component of the eukaryotic translation initiation factor 3 (eIF-3) complex.

It localises to the cytoplasm. Component of the eukaryotic translation initiation factor 3 (eIF-3) complex, which is involved in protein synthesis of a specialized repertoire of mRNAs and, together with other initiation factors, stimulates binding of mRNA and methionyl-tRNAi to the 40S ribosome. The eIF-3 complex specifically targets and initiates translation of a subset of mRNAs involved in cell proliferation. The polypeptide is Eukaryotic translation initiation factor 3 subunit I (Caenorhabditis briggsae).